Reading from the N-terminus, the 100-residue chain is Testis development-related protein 1 (100 aa).

Residues 73–100 (GLGSLGGQDSSGSLVQRASCELESPYEL) are disordered.

As to expression, expressed in the testis but not in any other non-reproductive tissues (at protein level). Mainly located in spermatogenic cells in seminiferous tubules of adult testis.

Its subcellular location is the cytoplasm. The sequence is that of Testis development-related protein 1 (TDRG1) from Homo sapiens (Human).